Reading from the N-terminus, the 310-residue chain is Ribosomal RNA small subunit methyltransferase H (310 aa).

Residues 32–34, Asp52, Phe79, Asp100, and Gln107 contribute to the S-adenosyl-L-methionine site; that span reads AGH.

Belongs to the methyltransferase superfamily. RsmH family.

It localises to the cytoplasm. It carries out the reaction cytidine(1402) in 16S rRNA + S-adenosyl-L-methionine = N(4)-methylcytidine(1402) in 16S rRNA + S-adenosyl-L-homocysteine + H(+). Its function is as follows. Specifically methylates the N4 position of cytidine in position 1402 (C1402) of 16S rRNA. This is Ribosomal RNA small subunit methyltransferase H from Bacillus pumilus (strain SAFR-032).